A 304-amino-acid polypeptide reads, in one-letter code: Nucleotide-binding protein RHA1_ro07174 (304 aa).

Position 24–31 (24–31 (GLSGAGLQ)) interacts with ATP. Residue 75-78 (DVRS) participates in GTP binding.

The protein belongs to the RapZ-like family.

In terms of biological role, displays ATPase and GTPase activities. In Rhodococcus jostii (strain RHA1), this protein is Nucleotide-binding protein RHA1_ro07174.